Here is a 209-residue protein sequence, read N- to C-terminus: dITP/XTP pyrophosphatase (209 aa).

A substrate-binding site is contributed by 7 to 12 (TGNKGK). Asp-73 (proton acceptor) is an active-site residue. Residue Asp-73 coordinates Mg(2+). Substrate-binding positions include Ser-74, 155–158 (FGYD), Lys-178, and 183–184 (HR).

The protein belongs to the HAM1 NTPase family. In terms of assembly, homodimer. Requires Mg(2+) as cofactor.

The enzyme catalyses XTP + H2O = XMP + diphosphate + H(+). It carries out the reaction dITP + H2O = dIMP + diphosphate + H(+). It catalyses the reaction ITP + H2O = IMP + diphosphate + H(+). Functionally, pyrophosphatase that catalyzes the hydrolysis of nucleoside triphosphates to their monophosphate derivatives, with a high preference for the non-canonical purine nucleotides XTP (xanthosine triphosphate), dITP (deoxyinosine triphosphate) and ITP. Seems to function as a house-cleaning enzyme that removes non-canonical purine nucleotides from the nucleotide pool, thus preventing their incorporation into DNA/RNA and avoiding chromosomal lesions. This chain is dITP/XTP pyrophosphatase, found in Sulfurovum sp. (strain NBC37-1).